The following is a 472-amino-acid chain: MSGTSSMGLPPGPRLSGSVQAVLMLRHGLRFLTACQRRYGSVFTLHVAGFGHMVYLSDPAAIKTVFAGNPSVFHAGEANSMLAGLLGDSSLLLIDDDVHRDRRRLMSPPFHRDAVARQAGPIAEIAAANIAGWPMAKAFAVAPKMSEITLEVILRTVIGASDPVRLAALRKVMPRLLNVGPWATLALANPSLLNNRLWSRLRRRIEEADALLYAEIADRRADPDLAARTDTLAMLVRAADEDGRTMTERELRDQLITLLVAGHDTTATGLSWALERLTRHPVTLAKAVQAADASAAGDPAGDEYLDAVAKETLRIRPVVYDVGRVLTEAVEVAGYRLPAGVMVVPAIGLVHASAQLYPDPERFDPDRMVGATLSPTTWLPFGGGNRRCLGATFAMVEMRVVLREILRRVELSTTTTSGERPKLKHVIMVPHRGARIRVRATRDVSATSQATAQGAGCPAARGGGPSRAVGSQ.

Cysteine 388 provides a ligand contact to heme. Residues 442 to 472 (RDVSATSQATAQGAGCPAARGGGPSRAVGSQ) are disordered. Residues 452-472 (AQGAGCPAARGGGPSRAVGSQ) show a composition bias toward low complexity.

It belongs to the cytochrome P450 family. The cofactor is heme.

The sequence is that of Putative cytochrome P450 135B1 (cyp135B1) from Mycobacterium bovis (strain ATCC BAA-935 / AF2122/97).